Consider the following 107-residue polypeptide: MGRMHAPGKGLSQSALPYRRSVPTWLKLTSDDVKEQIYKLAKKGLTPSQIGVILRDSHGVAQVRFVTGNKILRILKSKGLAPDLPEDLYHLIKKAVAVRKHLERNRK.

N6-acetyllysine; alternate is present on K27. K27 is modified (N6-succinyllysine; alternate). A Glycyl lysine isopeptide (Lys-Gly) (interchain with G-Cter in ubiquitin) cross-link involves residue K27. S30 carries the post-translational modification Phosphoserine. K34 is subject to N6-succinyllysine. At Y38 the chain carries Phosphotyrosine. A Glycyl lysine isopeptide (Lys-Gly) (interchain with G-Cter in SUMO2) cross-link involves residue K43.

This sequence belongs to the universal ribosomal protein uS15 family. Component of the small ribosomal subunit. Part of the small subunit (SSU) processome, composed of more than 70 proteins and the RNA chaperone small nucleolar RNA (snoRNA) U3. In terms of processing, ubiquitinated at Lys-27 by RNF14 and RNF25 in response to ribosome collisions (ribosome stalling).

The protein resides in the cytoplasm. Its subcellular location is the nucleus. It is found in the nucleolus. Its function is as follows. Component of the small ribosomal subunit. The ribosome is a large ribonucleoprotein complex responsible for the synthesis of proteins in the cell. Part of the small subunit (SSU) processome, first precursor of the small eukaryotic ribosomal subunit. During the assembly of the SSU processome in the nucleolus, many ribosome biogenesis factors, an RNA chaperone and ribosomal proteins associate with the nascent pre-rRNA and work in concert to generate RNA folding, modifications, rearrangements and cleavage as well as targeted degradation of pre-ribosomal RNA by the RNA exosome. The sequence is that of Small ribosomal subunit protein uS15 (RPS13) from Sus scrofa (Pig).